Here is a 219-residue protein sequence, read N- to C-terminus: UPF0073 inner membrane protein YqfA (219 aa).

Residues 1–23 (MVQKPLIKQGYSLAEEIANSVSH) lie on the Cytoplasmic side of the membrane. A helical membrane pass occupies residues 24–44 (GIGLVFGIVGLVLLLVQAVDL). The Periplasmic segment spans residues 45–53 (NASATAITS). A helical transmembrane segment spans residues 54–74 (YSLYGGSMILLFLASTLYHAI). Over 75-90 (PHQRAKMWLKKFDHCA) the chain is Cytoplasmic. The chain crosses the membrane as a helical span at residues 91–111 (IYLLIAGTYTPFLLVGLDSPL). Topologically, residues 112-113 (AR) are periplasmic. Residues 114-134 (GLMIVIWSLALLGILFKLTIA) form a helical membrane-spanning segment. The Cytoplasmic segment spans residues 135–138 (HRFK). The chain crosses the membrane as a helical span at residues 139-159 (ILSLVTYLAMGWLSLVVIYEM). Topologically, residues 160–165 (AVKLAA) are periplasmic. Residues 166–186 (GSVTLLAVGGVVYSLGVIFYV) form a helical membrane-spanning segment. At 187–195 (CKRIPYNHA) the chain is on the cytoplasmic side. The helical transmembrane segment at 196–216 (IWHGFVLGGSVCHFLAIYLYI) threads the bilayer. Over 217–219 (GQA) the chain is Periplasmic.

The protein belongs to the UPF0073 (Hly-III) family.

It localises to the cell inner membrane. The polypeptide is UPF0073 inner membrane protein YqfA (yqfA) (Escherichia coli O157:H7).